The chain runs to 1872 residues: Ral GTPase-activating protein subunit alpha-2 (1872 aa).

Phosphoserine occurs at positions 373, 376, and 379. Over residues 446–469 (DKKDVAEEDADKLGLSETDSKEVS) the composition is skewed to basic and acidic residues. The disordered stretch occupies residues 446–481 (DKKDVAEEDADKLGLSETDSKEVSSESSGHKRSSSW). A phosphoserine mark is found at serine 486 and serine 696. Disordered regions lie at residues 711–730 (FRSA…NTVR) and 758–849 (QPVP…TGSD). The residue at position 715 (threonine 715) is a Phosphothreonine; by PKB. Polar residues predominate over residues 775–795 (SDSSQGQKVENSQNLSSSEPK). A compositionally biased stretch (basic and acidic residues) spans 796–810 (SVQESKGHVTHEHEG). Phosphoserine is present on residues serine 819 and serine 820. Over residues 824 to 843 (LDLKEESQQTHGRCRERQKS) the composition is skewed to basic and acidic residues. Serine 1592 carries the phosphoserine modification. In terms of domain architecture, Rap-GAP spans 1634 to 1842 (LKNLDSRQCR…EERALYLEAI (209 aa)).

In terms of assembly, component of the heterodimeric RalGAP2 complex with RALGAPB. Heterodimerization is required for activity. In terms of tissue distribution, highly expressed in lung, liver, testis and thymus with lower levels in brain and heart (at protein level).

Its subcellular location is the cytoplasm. Catalytic subunit of the heterodimeric RalGAP2 complex which acts as a GTPase activator for the Ras-like small GTPases RALA and RALB. The chain is Ral GTPase-activating protein subunit alpha-2 from Rattus norvegicus (Rat).